Reading from the N-terminus, the 177-residue chain is Large ribosomal subunit protein uL6 (177 aa).

The protein belongs to the universal ribosomal protein uL6 family. Part of the 50S ribosomal subunit.

This protein binds to the 23S rRNA, and is important in its secondary structure. It is located near the subunit interface in the base of the L7/L12 stalk, and near the tRNA binding site of the peptidyltransferase center. The polypeptide is Large ribosomal subunit protein uL6 (Ruegeria pomeroyi (strain ATCC 700808 / DSM 15171 / DSS-3) (Silicibacter pomeroyi)).